The sequence spans 354 residues: Tryptophan--tRNA ligase (354 aa).

Residues 13–15 and 21–22 each bind ATP; these read QPT and GN. Positions 14-22 match the 'HIGH' region motif; sequence PTGNLHLGN. Aspartate 137 lines the L-tryptophan pocket. Residues 149 to 151, valine 208, and 217 to 221 contribute to the ATP site; these read GDD and KMSKS. A 'KMSKS' region motif is present at residues 217–221; the sequence is KMSKS.

It belongs to the class-I aminoacyl-tRNA synthetase family. In terms of assembly, homodimer.

It localises to the cytoplasm. It catalyses the reaction tRNA(Trp) + L-tryptophan + ATP = L-tryptophyl-tRNA(Trp) + AMP + diphosphate + H(+). In terms of biological role, catalyzes the attachment of tryptophan to tRNA(Trp). The protein is Tryptophan--tRNA ligase of Rhizobium meliloti (strain 1021) (Ensifer meliloti).